The following is a 238-amino-acid chain: ATP synthase subunit a (238 aa).

4 consecutive transmembrane segments (helical) span residues 17-37, 80-100, 112-132, and 194-214; these read LSNI…AIIC, ITLL…QIAI, DPIV…YYGI, and IFVG…SIFI.

The protein belongs to the ATPase A chain family. As to quaternary structure, F-type ATPases have 2 components, CF(1) - the catalytic core - and CF(0) - the membrane proton channel. CF(1) has five subunits: alpha(3), beta(3), gamma(1), delta(1), epsilon(1). CF(0) has three main subunits: a(1), b(2) and c(9-12). The alpha and beta chains form an alternating ring which encloses part of the gamma chain. CF(1) is attached to CF(0) by a central stalk formed by the gamma and epsilon chains, while a peripheral stalk is formed by the delta and b chains.

It is found in the cell membrane. Key component of the proton channel; it plays a direct role in the translocation of protons across the membrane. This chain is ATP synthase subunit a, found in Listeria innocua serovar 6a (strain ATCC BAA-680 / CLIP 11262).